The following is a 544-amino-acid chain: Methionine--tRNA ligase (544 aa).

Positions 10 to 20 match the 'HIGH' region motif; it reads PYANGSLHLGH. Cys-141, Cys-144, Cys-153, and Cys-156 together coordinate Zn(2+). Residues 329 to 333 carry the 'KMSKS' region motif; the sequence is KLSTS. ATP is bound at residue Thr-332.

Belongs to the class-I aminoacyl-tRNA synthetase family. MetG type 1 subfamily. In terms of assembly, monomer. Zn(2+) serves as cofactor.

The protein resides in the cytoplasm. It catalyses the reaction tRNA(Met) + L-methionine + ATP = L-methionyl-tRNA(Met) + AMP + diphosphate. Its function is as follows. Is required not only for elongation of protein synthesis but also for the initiation of all mRNA translation through initiator tRNA(fMet) aminoacylation. This is Methionine--tRNA ligase from Bacillus cereus (strain 03BB102).